The following is a 152-amino-acid chain: Small ribosomal subunit protein uS15 (152 aa).

Over residues 1–10 the composition is skewed to basic residues; it reads MARMYARRRG. Positions 1 to 24 are disordered; that stretch reads MARMYARRRGTSSSVRPYRKEAPE.

This sequence belongs to the universal ribosomal protein uS15 family. In terms of assembly, part of the 30S ribosomal subunit.

The chain is Small ribosomal subunit protein uS15 from Methanoculleus marisnigri (strain ATCC 35101 / DSM 1498 / JR1).